Reading from the N-terminus, the 232-residue chain is MSNMSMTLRDVPNRERPRERLLHEGAHALSNQEIVAIMLRTGTKNESVLQLAQHVLCHFDGLRLLREATVEELTSIHGIGEAKAIEFCAAIELGRRIHTMQEMDRYVIRTPEDVSRFVMEEMRFLSQENFVCLYLNTKNQVLHKQTVFIGSLNASIVHPREVFKEALRRSAASLICLHNHPSGDPTPSREDIEVTHRLAQVGKLIGIELLDHVIIGDRTFVSLKEKGHLPFS.

The region spanning 107 to 229 is the MPN domain; sequence VIRTPEDVSR…FVSLKEKGHL (123 aa). H178, H180, and D191 together coordinate Zn(2+). Residues 178 to 191 carry the JAMM motif motif; the sequence is HNHPSGDPTPSRED.

Belongs to the UPF0758 family.

The chain is UPF0758 protein BH3032 from Halalkalibacterium halodurans (strain ATCC BAA-125 / DSM 18197 / FERM 7344 / JCM 9153 / C-125) (Bacillus halodurans).